Reading from the N-terminus, the 207-residue chain is 8-oxoguanine DNA glycosylase/AP lyase (207 aa).

Residues lysine 128 and aspartate 146 contribute to the active site.

The protein belongs to the type-2 OGG1 family.

The enzyme catalyses 2'-deoxyribonucleotide-(2'-deoxyribose 5'-phosphate)-2'-deoxyribonucleotide-DNA = a 3'-end 2'-deoxyribonucleotide-(2,3-dehydro-2,3-deoxyribose 5'-phosphate)-DNA + a 5'-end 5'-phospho-2'-deoxyribonucleoside-DNA + H(+). Functionally, catalyzes the excision of an oxidatively damaged form of guanine (7,8-dihydro-8-oxoguanine = 8-oxoG) from DNA. Also cleaves the DNA backbone at apurinic/apyrimidinic sites (AP sites). The chain is 8-oxoguanine DNA glycosylase/AP lyase from Saccharolobus islandicus (strain L.S.2.15 / Lassen #1) (Sulfolobus islandicus).